We begin with the raw amino-acid sequence, 437 residues long: ATP-dependent protease ATPase subunit HslU (437 aa).

ATP is bound by residues valine 18, 60–65 (GVGKTE), aspartate 250, glutamate 315, and arginine 387.

Belongs to the ClpX chaperone family. HslU subfamily. A double ring-shaped homohexamer of HslV is capped on each side by a ring-shaped HslU homohexamer. The assembly of the HslU/HslV complex is dependent on binding of ATP.

The protein resides in the cytoplasm. ATPase subunit of a proteasome-like degradation complex; this subunit has chaperone activity. The binding of ATP and its subsequent hydrolysis by HslU are essential for unfolding of protein substrates subsequently hydrolyzed by HslV. HslU recognizes the N-terminal part of its protein substrates and unfolds these before they are guided to HslV for hydrolysis. This is ATP-dependent protease ATPase subunit HslU from Desulfovibrio desulfuricans (strain ATCC 27774 / DSM 6949 / MB).